The primary structure comprises 97 residues: Late transcription unit B protein (97 aa).

The disordered stretch occupies residues 24-45; it reads SIEGETKKEHKHHYSTASKEKE.

The protein is Late transcription unit B protein (ltuB) of Chlamydia trachomatis serovar D (strain ATCC VR-885 / DSM 19411 / UW-3/Cx).